Consider the following 117-residue polypeptide: Protein GL2-INTERACTING REPRESSOR 2 (117 aa).

The segment at 1–56 is disordered; that stretch reads MSRRNKNGPKLELRLNLSPPPSQASQMSLVRSPNRSNTTSPSSCVSSETNQEENET. The EAR signature appears at 10-15; sequence KLELRL. A compositionally biased stretch (low complexity) spans 31-49; that stretch reads RSPNRSNTTSPSSCVSSET.

Interacts with GL2. Interacts with TPL.

The protein resides in the nucleus. Functionally, acts as a negative regulator of root hair development redundantly with GIR1. GIR1 and GIR2 may function as adapter proteins that associate with GL2 and participate in the control of root hair formation. GIR1 and GIR2 may function as adapter proteins that associate with TPL and participate in the repression of root gene expression. This is Protein GL2-INTERACTING REPRESSOR 2 from Arabidopsis thaliana (Mouse-ear cress).